The sequence spans 895 residues: Androgen receptor (895 aa).

The interval 1 to 533 (MEVQLGLGRV…PIDYYFPPQK (533 aa)) is modulating. Positions 1–562 (MEVQLGLGRV…GSCKVFFKRA (562 aa)) are interaction with ZNF318. Disordered regions lie at residues 33 to 155 (VIQN…PTFP) and 175 to 211 (QLLQ…YLGG). Low complexity-rich tracts occupy residues 44 to 81 (AASA…GSPQ) and 175 to 200 (QLLQ…ASGA). Ser-66 is modified (phosphoserine; by CDK9). Ser-79 is subject to Phosphoserine. Polar residues predominate over residues 201–211 (PTSSKDNYLGG). Tyr-208 is modified (phosphotyrosine; by CSK). Residue Ser-241 is modified to Phosphoserine. Position 252 is a phosphotyrosine; by CSK and TNK2 (Tyr-252). Phosphotyrosine; by CSK occurs at positions 292, 331, 342, and 347. Tyr-348 bears the Phosphotyrosine; by CSK and TNK2 mark. Residue Lys-371 forms a Glycyl lysine isopeptide (Lys-Gly) (interchain with G-Cter in SUMO) linkage. Residue Tyr-378 is modified to Phosphotyrosine; by CSK. Lys-496 is covalently cross-linked (Glycyl lysine isopeptide (Lys-Gly) (interchain with G-Cter in SUMO)). Residues Tyr-510 and Tyr-527 each carry the phosphotyrosine; by CSK modification. The interval 527-894 (YYFPPQKTCL…GKVKPIYFHT (368 aa)) is interaction with LPXN. The nuclear receptor DNA-binding region spans 534–607 (TCLICGDEAS…AGMTLGARKL (74 aa)). 2 consecutive NR C4-type zinc fingers follow at residues 535 to 555 (CLIC…CGSC) and 571 to 595 (CASR…LRKC). The interval 547 to 637 (YGALTCGSCK…TEETAQKLTV (91 aa)) is interaction with HIPK3. The segment at 567–894 (QKYLCASRND…GKVKPIYFHT (328 aa)) is interaction with CCAR1. An interaction with KAT7 region spans residues 600–894 (MTLGARKLKK…GKVKPIYFHT (295 aa)). At Ser-626 the chain carries Phosphoserine; by STK4/MST1. The NR LBD domain occupies 644–875 (ECQPIFLNVL…DFPEMMAEII (232 aa)). 17beta-hydroxy-5alpha-androstan-3-one contacts are provided by Asn-681 and Arg-728. Glycyl lysine isopeptide (Lys-Gly) (interchain with G-Cter in ubiquitin) cross-links involve residues Lys-821 and Lys-823. 17beta-hydroxy-5alpha-androstan-3-one is bound at residue Thr-853. Position 891 is a phosphotyrosine; by CSK (Tyr-891).

It belongs to the nuclear hormone receptor family. NR3 subfamily. As to quaternary structure, binds DNA as a homodimer. Part of a ternary complex containing AR, EFCAB6/DJBP and PARK7. Interacts with HIPK3 and NR0B2 in the presence of androgen. The ligand binding domain interacts with KAT7/HBO1 in the presence of dihydrotestosterone. Interacts with EFCAB6/DJBP, PQBP1, RANBP9, RBAK, SPDEF, SRA1, TGFB1I1 and RREB1. Interacts with ZMIZ1/ZIMP10 and ZMIZ2/ZMIP7 which both enhance its transactivation activity. Interacts with SLC30A9 and RAD54L2/ARIP4. Interacts with MACROD1 (via macro domain). Interacts via the ligand-binding domain with LXXLL and FXXLF motifs from NCOA1, NCOA2, NCOA3 and MAGEA11. Interacts (via nuclear receptor DNA binding domain and nuclear receptor ligand binding domain) with NCOA4. The AR N-terminal poly-Gln region binds Ran resulting in enhancement of AR-mediated transactivation. Ran-binding decreases as the poly-Gln length increases. Interacts with HIP1 (via coiled coil domain). Interacts (via ligand-binding domain) with TRIM68. Interacts with TNK2. Interacts with USP26. Interacts with RNF6. Interacts (regulated by RNF6 probably through polyubiquitination) with RNF14; regulates AR transcriptional activity. Interacts with PRMT2 and TRIM24. Interacts with RACK1. Interacts with RANBP10; this interaction enhances dihydrotestosterone-induced AR transcriptional activity. Interacts with PRPF6 in a hormone-independent way; this interaction enhances dihydrotestosterone-induced AR transcriptional activity. Interacts with STK4/MST1. Interacts with ZIPK/DAPK3. Interacts with LPXN. Interacts with MAK. Part of a complex containing AR, MAK and NCOA3. Interacts with CRY1. Interacts with CCAR1 and GATA2. Interacts with ZNF318. Interacts with BUD31. Interacts with ARID4A. Interacts with ARID4B. Interacts (via NR LBD domain) with ZBTB7A; the interaction is direct and androgen-dependent. Interacts with NCOR1. Interacts with NCOR2. Interacts with CRY2 in a ligand-dependent manner. Post-translationally, phosphorylated in prostate cancer cells in response to several growth factors including EGF. Phosphorylation is induced by c-Src kinase (CSK). Tyr-510 is one of the major phosphorylation sites and an increase in phosphorylation and Src kinase activity is associated with prostate cancer progression. Phosphorylation by TNK2 enhances the DNA-binding and transcriptional activity. Phosphorylation at Ser-66 by CDK9 regulates AR promoter selectivity and cell growth. Sumoylated on Lys-371 (major) and Lys-496. Ubiquitinated. Deubiquitinated by USP26. 'Lys-6' and 'Lys-27'-linked polyubiquitination by RNF6 modulates AR transcriptional activity and specificity. In terms of processing, palmitoylated by ZDHHC7 and ZDHHC21. Palmitoylation is required for plasma membrane targeting and for rapid intracellular signaling via ERK and AKT kinases and cAMP generation.

Its subcellular location is the nucleus. It localises to the cytoplasm. Functionally, steroid hormone receptors are ligand-activated transcription factors that regulate eukaryotic gene expression and affect cellular proliferation and differentiation in target tissues. Transcription factor activity is modulated by bound coactivator and corepressor proteins like ZBTB7A that recruits NCOR1 and NCOR2 to the androgen response elements/ARE on target genes, negatively regulating androgen receptor signaling and androgen-induced cell proliferation. Transcription activation is also down-regulated by NR0B2. Activated, but not phosphorylated, by HIPK3 and ZIPK/DAPK3. The polypeptide is Androgen receptor (AR) (Papio hamadryas (Hamadryas baboon)).